The primary structure comprises 781 residues: Isoquinoline 1-oxidoreductase subunit beta (781 aa).

In terms of assembly, heterodimer of an alpha chain and a beta chain.

The enzyme catalyses isoquinoline + A + H2O = isoquinolin-1(2H)-one + AH2. Specific towards N-containing N-heterocyclic substrates, including isoquinoline, isoquinolin-5-ol, phthalazine and quinazoline. This is Isoquinoline 1-oxidoreductase subunit beta (iorB) from Brevundimonas diminuta (Pseudomonas diminuta).